The chain runs to 208 residues: Glutathione S-transferase P (208 aa).

Residues 1-78 (MTLKLTYFDI…HLARLNGLNG (78 aa)) form the GST N-terminal domain. Glutathione-binding positions include Y7, W38, K42, 49–50 (QV), and 62–63 (QS). Positions 80–202 (NETETTFIDM…NKRAAINPPV (123 aa)) constitute a GST C-terminal domain.

This sequence belongs to the GST superfamily. Pi family. As to quaternary structure, homodimer. As to expression, expressed in dopaminergic (DA) neuron (at protein levels).

It carries out the reaction RX + glutathione = an S-substituted glutathione + a halide anion + H(+). Its function is as follows. Conjugation of reduced glutathione to a wide number of exogenous and endogenous hydrophobic electrophiles. Prevents dopaminergic CEP neuron degeneration in response to Mn(2+). The sequence is that of Glutathione S-transferase P (gst-1) from Caenorhabditis elegans.